Reading from the N-terminus, the 36-residue chain is uncharacterized protein (36 aa).

Positions 1 to 14 (MNQLGSGPTKQGVA) are enriched in polar residues. Positions 1 to 36 (MNQLGSGPTKQGVATNTGSTGTTKNNSNLSGKGWVL) are disordered. Residues 15–36 (TNTGSTGTTKNNSNLSGKGWVL) show a composition bias toward low complexity.

This is an uncharacterized protein from Dictyostelium discoideum (Social amoeba).